The primary structure comprises 299 residues: Acetylglutamate kinase (299 aa).

Substrate contacts are provided by residues 72–73 (GG), Arg94, and Asn196.

This sequence belongs to the acetylglutamate kinase family. ArgB subfamily.

It localises to the cytoplasm. The enzyme catalyses N-acetyl-L-glutamate + ATP = N-acetyl-L-glutamyl 5-phosphate + ADP. It functions in the pathway amino-acid biosynthesis; L-arginine biosynthesis; N(2)-acetyl-L-ornithine from L-glutamate: step 2/4. Functionally, catalyzes the ATP-dependent phosphorylation of N-acetyl-L-glutamate. This is Acetylglutamate kinase from Paraburkholderia phymatum (strain DSM 17167 / CIP 108236 / LMG 21445 / STM815) (Burkholderia phymatum).